Consider the following 623-residue polypeptide: Cilia- and flagella-associated protein 52 (623 aa).

WD repeat units follow at residues 65–109 (GHGN…LMAR), 112–153 (LHKG…AICG), 159–198 (LNVGNATTVIFSKCRDEMFVTAGNGTIRVWELDLPNRKIW), 291–330 (QLQGGITSITLRGEGHQFFVGTEESHIYRVNFTNFKETLI), 333–372 (CHFESVEDIVFPFGTAELFATCAKKDIRVWHTLTNRELLR), 375–414 (VPNMTCHGIDFMRDGKSIISAWDDGRIRAFAPETGRLMYV), 418–457 (AHRIGVTAIATTSDCKRVISGGGEGEVRVWHIGHQTQKLE), 462–501 (EHKSSVSCIRVKKSNEECVTASTDGTCIIWDLVRLRRNQM), 503–544 (LANT…RELD), 546–585 (SLSGAVNGMDITVEGVHFVTGGNDHLVKVWDYNEGEVTHV), and 588–623 (GHSGNITRIRISPGNQYIVSVSADGAILRWKYPFPS).

This sequence belongs to the CFAP52 family. In terms of assembly, microtubule inner protein component of sperm flagellar doublet microtubules. Interacts with BRCA2. Interacts with the CCT chaperonin complex. Interacts with HSP70. Interacts with AK8. Interacts with CFAP45. Interacts with DNAI1. Interacts with IQDC. As to expression, expressed in trachea multiciliated cells.

It is found in the cytoplasm. It localises to the cytoskeleton. Its subcellular location is the cilium axoneme. The protein resides in the flagellum axoneme. Microtubule inner protein (MIP) part of the dynein-decorated doublet microtubules (DMTs) in cilia axoneme. Important for proper ciliary and flagellar beating. May act in cooperation with CFAP45 and axonemal dynein subunit DNAH11. May play a role in cell growth and/or survival. This chain is Cilia- and flagella-associated protein 52 (CFAP52), found in Bos taurus (Bovine).